The following is a 655-amino-acid chain: Sphingomyelin phosphodiesterase 3 (655 aa).

Residues 1-10 (MVLYTTPFPN) lie on the Cytoplasmic side of the membrane. An intramembrane region (helical) is located at residues 11–31 (SCLSALHAVSWALIFPCYWLV). Over 32–64 (DRLLASFIPTTYEKRQRADDPCCLQLFCTVLFT) the chain is Cytoplasmic. 3 S-palmitoyl cysteine lipidation sites follow: Cys-53, Cys-54, and Cys-59. Positions 65 to 85 (PVYLALLVAALPFAFLGFIFW) form an intramembrane region, helical. The Cytoplasmic portion of the chain corresponds to 86–655 (SPLQSARRPY…LMVSAGEEEA (570 aa)). A Phosphoserine modification is found at Ser-178. Residues 209–318 (VEYKGDGGRH…SGGSGEPGAN (110 aa)) are disordered. Basic and acidic residues-rich tracts occupy residues 211 to 221 (YKGDGGRHPSD) and 246 to 255 (GGEEGGRPQE). Ser-289 is modified (phosphoserine). Glu-362 is a Mg(2+) binding site. Residues Cys-395 and Cys-396 are each lipidated (S-palmitoyl cysteine). His-639 functions as the Proton acceptor in the catalytic mechanism.

The protein belongs to the neutral sphingomyelinase family. The cofactor is Mg(2+). Palmitoylated, palmitoylation-deficient proteins are targeted for lysosomal degradation. Predominantly expressed in brain (at protein level).

It is found in the golgi apparatus membrane. The protein resides in the cell membrane. The enzyme catalyses a sphingomyelin + H2O = phosphocholine + an N-acylsphing-4-enine + H(+). It catalyses the reaction N-(15Z-tetracosenoyl)sphing-4-enine-1-phosphocholine + H2O = N-(15Z-tetracosenoyl)-sphing-4-enine + phosphocholine + H(+). The catalysed reaction is N-(tetracosanoyl)-sphing-4-enine-1-phosphocholine + H2O = N-tetracosanoyl-sphing-4-enine + phosphocholine + H(+). It carries out the reaction N-(hexadecanoyl)-sphing-4-enine-1-phosphocholine + H2O = N-hexadecanoylsphing-4-enine + phosphocholine + H(+). The enzyme catalyses an N-(acyl)-sphingosylphosphocholine + H2O = an N-acyl-sphingoid base + phosphocholine + H(+). It catalyses the reaction 1-hexadecanoyl-sn-glycero-3-phosphocholine + H2O = 1-hexadecanoyl-sn-glycerol + phosphocholine + H(+). The catalysed reaction is 1-O-octadecyl-sn-glycero-3-phosphocholine + H2O = 1-O-octadecyl-sn-glycerol + phosphocholine + H(+). It carries out the reaction a sphingosylphosphocholine + H2O = a sphingoid base + phosphocholine + H(+). The protein operates within lipid metabolism; sphingolipid metabolism. With respect to regulation, inhibited by nSMase inhibitor GW4869. Binding of anionic phospholipids (APLs) such as phosphatidylserine (PS) and phosphatidic acid (PA) increases enzymatic activity. Catalyzes the hydrolysis of sphingomyelin to form ceramide and phosphocholine. Ceramide mediates numerous cellular functions, such as apoptosis and growth arrest, and is capable of regulating these 2 cellular events independently. Also hydrolyzes sphingosylphosphocholine. Regulates the cell cycle by acting as a growth suppressor in confluent cells. Probably acts as a regulator of postnatal development and participates in bone and dentin mineralization. Binds to anionic phospholipids (APLs) such as phosphatidylserine (PS) and phosphatidic acid (PA) that modulate enzymatic activity and subcellular location. May be involved in IL-1-beta-induced JNK activation in hepatocytes. May act as a mediator in transcriptional regulation of NOS2/iNOS via the NF-kappa-B activation under inflammatory conditions. The chain is Sphingomyelin phosphodiesterase 3 from Mus musculus (Mouse).